Here is a 408-residue protein sequence, read N- to C-terminus: Na(+)-translocating NADH-quinone reductase subunit F (408 aa).

The helical transmembrane segment at 6 to 26 (IILGVVMFTAIVLALVAIILA) threads the bilayer. One can recognise a 2Fe-2S ferredoxin-type domain in the interval 35 to 127 (GDVTIRINGE…DMDVEVPEEV (93 aa)). Residues cysteine 70, cysteine 76, cysteine 79, and cysteine 111 each contribute to the [2Fe-2S] cluster site. Residues 130-270 (VKAWECTVES…YGPFGEFFAK (141 aa)) enclose the FAD-binding FR-type domain.

The protein belongs to the NqrF family. Composed of six subunits; NqrA, NqrB, NqrC, NqrD, NqrE and NqrF. It depends on [2Fe-2S] cluster as a cofactor. FAD serves as cofactor.

The protein localises to the cell inner membrane. The enzyme catalyses a ubiquinone + n Na(+)(in) + NADH + H(+) = a ubiquinol + n Na(+)(out) + NAD(+). Its function is as follows. NQR complex catalyzes the reduction of ubiquinone-1 to ubiquinol by two successive reactions, coupled with the transport of Na(+) ions from the cytoplasm to the periplasm. The first step is catalyzed by NqrF, which accepts electrons from NADH and reduces ubiquinone-1 to ubisemiquinone by a one-electron transfer pathway. The sequence is that of Na(+)-translocating NADH-quinone reductase subunit F from Marinomonas sp. (strain MWYL1).